A 477-amino-acid polypeptide reads, in one-letter code: Inositol phosphosphingolipids phospholipase C (477 aa).

The Cytoplasmic portion of the chain corresponds to 1–398 (MYNRKDRDVH…QRQKFFRGLH (398 aa)). Glu100 lines the Mg(2+) pocket. Catalysis depends on His334, which acts as the Proton acceptor. Residues 399-417 (FWASILLLIASLVVTTFTA) traverse the membrane as a helical segment. At 418–424 (NKAGWSS) the chain is on the mitochondrial intermembrane side. Residues 425 to 449 (IFWVLFAIAVSISGTIDGAISFLFG) traverse the membrane as a helical segment. The Cytoplasmic portion of the chain corresponds to 450 to 477 (RSEIRALIEVEQEVLDAEHHLQTFLSEK).

Belongs to the neutral sphingomyelinase family. Requires Mg(2+) as cofactor.

Its subcellular location is the endoplasmic reticulum membrane. The protein resides in the mitochondrion outer membrane. The catalysed reaction is an N-acyl-(4R)-4-hydroxysphinganine-1-phosphoinositol + H2O = 1D-myo-inositol 1-phosphate + an N-acyl-(4R)-4-hydroxysphinganine + H(+). It catalyses the reaction a mannosylinositol-1-phospho-N-acyl-sphingoid base + H2O = mannosylinositol-1-phosphate + an N-acyl-sphingoid base + H(+). It carries out the reaction an inositol phosphomannosylinositol-1-phospho-N-acyl-(4R)-4-hydroxysphinganine + H2O = mannosyldiinositol-1-phosphate + an N-acyl-(4R)-4-hydroxysphinganine + H(+). The protein operates within lipid metabolism; sphingolipid metabolism. Its activity is regulated as follows. Activated through localization to mitochondria in specific growth phases. Responsible for the hydrolysis of the phosphosphingolipids (IPS), inositol phosphorylceramide (IPC), mannosylinositol phosphorylceramide (MIPC), and mannosyldiinositol phosphorylceramide (M(IP)2C). Regulates sphingolipid metabolism in mitochondria, especially the formation of alpha-hydroxylated very long chain phytoceramides. The generated ceramides contribute to the normal function of mitochondria. Also active on sphingomyelin (SM), but this activity is probably not physiologically relevant. The protein is Inositol phosphosphingolipids phospholipase C of Saccharomyces cerevisiae (strain ATCC 204508 / S288c) (Baker's yeast).